Here is a 1004-residue protein sequence, read N- to C-terminus: 26S proteasome non-ATPase regulatory subunit 1 homolog A (1004 aa).

N-acetylalanine is present on Ala-2. Lys-166 is covalently cross-linked (Glycyl lysine isopeptide (Lys-Gly) (interchain with G-Cter in ubiquitin)). PC repeat units lie at residues 412–447, 452–485, 487–521, 522–555, 557–590, 591–626, 627–659, 661–695, 696–736, and 739–771; these read SATA…GGSP, GALY…EVIQ, GACL…VAGE, AAGI…EKII, GLAL…IIRY, GGMY…DVRR, TAVL…PHVR, GAAL…FVRQ, GALI…DTMS, and GAIL…TAVI. 2 disordered regions span residues 858-905 and 959-1004; these read EQKA…KKAP and VLSL…EYAS. Position 896 is a phosphoserine (Ser-896). The span at 965 to 987 shows a compositional bias: low complexity; the sequence is APTSTASPATGTAAAAQGTPASA.

This sequence belongs to the proteasome subunit S1 family. Component of the 19S regulatory particle (RP/PA700) base subcomplex of the 26S proteasome. The 26S proteasome is composed of a core protease (CP), known as the 20S proteasome, capped at one or both ends by the 19S regulatory particle (RP/PA700). The RP/PA700 complex is composed of at least 17 different subunits in two subcomplexes, the base and the lid, which form the portions proximal and distal to the 20S proteolytic core, respectively. Ubiquitous with highest expression in flowers.

In terms of biological role, acts as a regulatory subunit of the 26 proteasome which is involved in the ATP-dependent degradation of ubiquitinated proteins. In Arabidopsis thaliana (Mouse-ear cress), this protein is 26S proteasome non-ATPase regulatory subunit 1 homolog A (RPN2A).